Here is a 36-residue protein sequence, read N- to C-terminus: Photosystem I reaction center subunit VIII (36 aa).

Residues 8–28 (SILVPLVGLVFPAIAMASLFL) form a helical membrane-spanning segment.

The protein belongs to the PsaI family.

It is found in the plastid. Its subcellular location is the chloroplast thylakoid membrane. In terms of biological role, may help in the organization of the PsaL subunit. In Vitis vinifera (Grape), this protein is Photosystem I reaction center subunit VIII.